The sequence spans 880 residues: DNA gyrase subunit A (880 aa).

Positions 35–530 (LPDVRDGLKP…ASGDIDLEDL (496 aa)) constitute a Topo IIA-type catalytic domain. Tyr-123 (O-(5'-phospho-DNA)-tyrosine intermediate) is an active-site residue. Positions 557-563 (QRRGGKG) match the GyrA-box motif.

This sequence belongs to the type II topoisomerase GyrA/ParC subunit family. Heterotetramer, composed of two GyrA and two GyrB chains. In the heterotetramer, GyrA contains the active site tyrosine that forms a transient covalent intermediate with DNA, while GyrB binds cofactors and catalyzes ATP hydrolysis.

Its subcellular location is the cytoplasm. It carries out the reaction ATP-dependent breakage, passage and rejoining of double-stranded DNA.. Functionally, a type II topoisomerase that negatively supercoils closed circular double-stranded (ds) DNA in an ATP-dependent manner to modulate DNA topology and maintain chromosomes in an underwound state. Negative supercoiling favors strand separation, and DNA replication, transcription, recombination and repair, all of which involve strand separation. Also able to catalyze the interconversion of other topological isomers of dsDNA rings, including catenanes and knotted rings. Type II topoisomerases break and join 2 DNA strands simultaneously in an ATP-dependent manner. The polypeptide is DNA gyrase subunit A (Haemophilus influenzae (strain ATCC 51907 / DSM 11121 / KW20 / Rd)).